A 248-amino-acid polypeptide reads, in one-letter code: Ubiquinone biosynthesis O-methyltransferase (248 aa).

4 residues coordinate S-adenosyl-L-methionine: arginine 41, glycine 72, aspartate 93, and methionine 136.

It belongs to the methyltransferase superfamily. UbiG/COQ3 family.

The enzyme catalyses a 3-demethylubiquinol + S-adenosyl-L-methionine = a ubiquinol + S-adenosyl-L-homocysteine + H(+). It carries out the reaction a 3-(all-trans-polyprenyl)benzene-1,2-diol + S-adenosyl-L-methionine = a 2-methoxy-6-(all-trans-polyprenyl)phenol + S-adenosyl-L-homocysteine + H(+). The protein operates within cofactor biosynthesis; ubiquinone biosynthesis. In terms of biological role, O-methyltransferase that catalyzes the 2 O-methylation steps in the ubiquinone biosynthetic pathway. This chain is Ubiquinone biosynthesis O-methyltransferase, found in Brucella melitensis biotype 2 (strain ATCC 23457).